A 345-amino-acid polypeptide reads, in one-letter code: Opioid-binding protein/cell adhesion molecule (345 aa).

The N-terminal stretch at 1–27 is a signal peptide; it reads MGVCGSLFQPWKCLVVVSLRLLFLVPT. 3 Ig-like C2-type domains span residues 39-126, 136-219, and 223-310; these read PKAM…PKTS, PQIM…VKIT, and PPYI…ASIT. Asparagine 44, asparagine 70, and asparagine 140 each carry an N-linked (GlcNAc...) asparagine glycan. Cysteines 57 and 115 form a disulfide. Disulfide bonds link cysteine 157–cysteine 202 and cysteine 244–cysteine 296. Asparagine 285, asparagine 293, and asparagine 306 each carry an N-linked (GlcNAc...) asparagine glycan. A lipid anchor (GPI-anchor amidated asparagine) is attached at asparagine 322. A propeptide spans 323-345 (removed in mature form); that stretch reads SASRALACLWLSGTLFAHFFIKF.

The protein belongs to the immunoglobulin superfamily. IgLON family.

The protein resides in the cell membrane. In terms of biological role, binds opioids in the presence of acidic lipids; probably involved in cell contact. This is Opioid-binding protein/cell adhesion molecule (OPCML) from Bos taurus (Bovine).